The primary structure comprises 226 residues: ATP synthase F(0) complex subunit a (226 aa).

7 helical membrane passes run 11–31 (SPEL…VLLI), 37–54 (LLGN…MTIM), 72–92 (LTSL…PYTF), 98–118 (LSMN…TGMT), 138–158 (IPFM…ALGV), 178–198 (TLNF…LLFL), and 199–219 (LCIL…LLII).

The protein belongs to the ATPase A chain family. In terms of assembly, component of the ATP synthase complex composed at least of ATP5F1A/subunit alpha, ATP5F1B/subunit beta, ATP5MC1/subunit c (homooctomer), MT-ATP6/subunit a, MT-ATP8/subunit 8, ATP5ME/subunit e, ATP5MF/subunit f, ATP5MG/subunit g, ATP5MK/subunit k, ATP5MJ/subunit j, ATP5F1C/subunit gamma, ATP5F1D/subunit delta, ATP5F1E/subunit epsilon, ATP5PF/subunit F6, ATP5PB/subunit b, ATP5PD/subunit d, ATP5PO/subunit OSCP. ATP synthase complex consists of a soluble F(1) head domain (subunits alpha(3) and beta(3)) - the catalytic core - and a membrane F(0) domain - the membrane proton channel (subunits c, a, 8, e, f, g, k and j). These two domains are linked by a central stalk (subunits gamma, delta, and epsilon) rotating inside the F1 region and a stationary peripheral stalk (subunits F6, b, d, and OSCP). Interacts with DNAJC30; interaction is direct.

It is found in the mitochondrion inner membrane. It carries out the reaction H(+)(in) = H(+)(out). In terms of biological role, subunit a, of the mitochondrial membrane ATP synthase complex (F(1)F(0) ATP synthase or Complex V) that produces ATP from ADP in the presence of a proton gradient across the membrane which is generated by electron transport complexes of the respiratory chain. ATP synthase complex consist of a soluble F(1) head domain - the catalytic core - and a membrane F(1) domain - the membrane proton channel. These two domains are linked by a central stalk rotating inside the F(1) region and a stationary peripheral stalk. During catalysis, ATP synthesis in the catalytic domain of F(1) is coupled via a rotary mechanism of the central stalk subunits to proton translocation. With the subunit c (ATP5MC1), forms the proton-conducting channel in the F(0) domain, that contains two crucial half-channels (inlet and outlet) that facilitate proton movement from the mitochondrial intermembrane space (IMS) into the matrix. Protons are taken up via the inlet half-channel and released through the outlet half-channel, following a Grotthuss mechanism. The sequence is that of ATP synthase F(0) complex subunit a from Lycodon semicarinatus (Ryukyu odd-tooth snake).